A 425-amino-acid polypeptide reads, in one-letter code: Stabilizer of axonemal microtubules 4 (425 aa).

3 disordered regions span residues 93–126 (PLEVPDGKHPLPWSMRQTSSGYGREKPSAGPPTK), 203–225 (EGSGFTKQSHQSPIVFQPPSQAL), and 316–335 (KEPTGFSLNNPMYVRSPCDP). The segment covering 207–222 (FTKQSHQSPIVFQPPS) has biased composition (polar residues).

As to quaternary structure, microtubule inner protein component of sperm flagellar doublet microtubules. Interacts with PPP1CA.

The protein localises to the cell projection. Its subcellular location is the cilium. The protein resides in the cytoplasm. It localises to the cytoskeleton. It is found in the flagellum axoneme. The polypeptide is Stabilizer of axonemal microtubules 4 (Homo sapiens (Human)).